Consider the following 117-residue polypeptide: MPLYEHVFISRQDLSNAQAESLVEHFGSVLADNGGKVVDSEYWGLKTMAYKINKNRKGHYAFLKTDAPAPAVQEMERLMRLHDDVMRVMTIKVDEHPEGPSIQMQKREERDNRRERR.

Residues 92 to 117 (KVDEHPEGPSIQMQKREERDNRRERR) form a disordered region. Residues 105–117 (QKREERDNRRERR) show a composition bias toward basic and acidic residues.

The protein belongs to the bacterial ribosomal protein bS6 family.

Its function is as follows. Binds together with bS18 to 16S ribosomal RNA. The sequence is that of Small ribosomal subunit protein bS6 from Dinoroseobacter shibae (strain DSM 16493 / NCIMB 14021 / DFL 12).